Reading from the N-terminus, the 1258-residue chain is uncharacterized protein (1258 aa).

The stretch at 55 to 93 (ELASEILGVCWQENGVLAAGISEGTWKRFLAGKQAINAE) is one WD 1 repeat. Residues 112–128 (GGRTKERKDTGTSRQEK) are compositionally biased toward basic and acidic residues. The tract at residues 112 to 138 (GGRTKERKDTGTSRQEKFLSSSHPHTD) is disordered. 14 WD repeats span residues 640–679 (ETLG…LLLI), 682–721 (GHSN…CIKT), 724–763 (GHEH…CLQT), 766–807 (GHTD…RTLK), 809–849 (HTGW…KTYI), 850–889 (GHTN…CIKT), 892–931 (GHTN…CLKA), 934–975 (GNTD…SSLE), 976–1017 (GHTD…QILL), 1019–1059 (HTDW…KTLS), 1060–1101 (EHSD…GILR), 1103–1143 (HSNR…KTLT), 1144–1183 (GHTN…CHHI), and 1186–1227 (GHTH…QILR).

This is an uncharacterized protein from Nostoc sp. (strain PCC 7120 / SAG 25.82 / UTEX 2576).